The primary structure comprises 735 residues: Phosphoribosylformylglycinamidine synthase subunit PurL (735 aa).

H49 is a catalytic residue. 2 residues coordinate ATP: Y52 and K91. Residue E93 participates in Mg(2+) binding. Residues 94-97 and R116 contribute to the substrate site; that span reads SHNH. H95 acts as the Proton acceptor in catalysis. Mg(2+) is bound at residue D117. Q240 is a binding site for substrate. Mg(2+) is bound at residue D268. Residue 312–314 coordinates substrate; the sequence is ESQ. ATP is bound by residues D493 and G530. Residue N531 coordinates Mg(2+). S533 contacts substrate.

Belongs to the FGAMS family. As to quaternary structure, monomer. Part of the FGAM synthase complex composed of 1 PurL, 1 PurQ and 2 PurS subunits.

It is found in the cytoplasm. It carries out the reaction N(2)-formyl-N(1)-(5-phospho-beta-D-ribosyl)glycinamide + L-glutamine + ATP + H2O = 2-formamido-N(1)-(5-O-phospho-beta-D-ribosyl)acetamidine + L-glutamate + ADP + phosphate + H(+). Its pathway is purine metabolism; IMP biosynthesis via de novo pathway; 5-amino-1-(5-phospho-D-ribosyl)imidazole from N(2)-formyl-N(1)-(5-phospho-D-ribosyl)glycinamide: step 1/2. Functionally, part of the phosphoribosylformylglycinamidine synthase complex involved in the purines biosynthetic pathway. Catalyzes the ATP-dependent conversion of formylglycinamide ribonucleotide (FGAR) and glutamine to yield formylglycinamidine ribonucleotide (FGAM) and glutamate. The FGAM synthase complex is composed of three subunits. PurQ produces an ammonia molecule by converting glutamine to glutamate. PurL transfers the ammonia molecule to FGAR to form FGAM in an ATP-dependent manner. PurS interacts with PurQ and PurL and is thought to assist in the transfer of the ammonia molecule from PurQ to PurL. The chain is Phosphoribosylformylglycinamidine synthase subunit PurL from Methylocella silvestris (strain DSM 15510 / CIP 108128 / LMG 27833 / NCIMB 13906 / BL2).